The sequence spans 554 residues: HMG box-containing protein 4 (554 aa).

3 disordered regions span residues 14-34 (RGME…KRSY), 47-368 (QVRK…SAYQ), and 418-468 (HKQN…SPAK). A compositionally biased stretch (polar residues) spans 117 to 127 (TSPQVDTSTTH). The span at 221–230 (TGREETESRS) shows a compositional bias: basic and acidic residues. Residues 242–255 (PRSGGTPDSASSTG) are compositionally biased toward polar residues. The segment covering 272-300 (MKKKKKSKKSKKKKDKHKDEKHRKHSKSK) has biased composition (basic residues). Residues 317–335 (LPSPPPPTATTPTSPPSVP) are compositionally biased toward pro residues. The span at 342-358 (HAEEQLDKKKKKEDPEK) shows a compositional bias: basic and acidic residues. A DNA-binding region (HMG box) is located at residues 360–428 (KKKNMSAYQV…KQNKAEATTV (69 aa)). The segment covering 434–466 (SSESAARSKGSSSGLPSPNKKSPTSVVSFSTSP) has biased composition (low complexity).

As to quaternary structure, interacts with nlk.2.

Its subcellular location is the nucleus. Negatively regulates Wnt/beta-catenin signaling during development. In Xenopus tropicalis (Western clawed frog), this protein is HMG box-containing protein 4 (hmgxb4).